The following is a 568-amino-acid chain: Urease subunit alpha (568 aa).

Residues 131–568 form the Urease domain; it reads GGIDTHIHFI…LPMAQRYFLF (438 aa). Ni(2+) is bound by residues His136, His138, and Lys219. The residue at position 219 (Lys219) is an N6-carboxylysine. His221 contributes to the substrate binding site. His248 and His274 together coordinate Ni(2+). His322 acts as the Proton donor in catalysis. Residue Asp362 participates in Ni(2+) binding.

Belongs to the metallo-dependent hydrolases superfamily. Urease alpha subunit family. Heterotrimer of UreA (gamma), UreB (beta) and UreC (alpha) subunits. Three heterotrimers associate to form the active enzyme. Ni cation is required as a cofactor. Post-translationally, carboxylation allows a single lysine to coordinate two nickel ions.

It is found in the cytoplasm. The enzyme catalyses urea + 2 H2O + H(+) = hydrogencarbonate + 2 NH4(+). Its pathway is nitrogen metabolism; urea degradation; CO(2) and NH(3) from urea (urease route): step 1/1. The protein is Urease subunit alpha of Trichormus variabilis (strain ATCC 29413 / PCC 7937) (Anabaena variabilis).